The primary structure comprises 209 residues: Thiamine-phosphate synthase (209 aa).

4-amino-2-methyl-5-(diphosphooxymethyl)pyrimidine-binding positions include 38 to 42 and N70; that span reads QYRAK. Residues D71 and D90 each coordinate Mg(2+). A 4-amino-2-methyl-5-(diphosphooxymethyl)pyrimidine-binding site is contributed by S109. 135 to 137 provides a ligand contact to 2-[(2R,5Z)-2-carboxy-4-methylthiazol-5(2H)-ylidene]ethyl phosphate; that stretch reads TST. K138 is a binding site for 4-amino-2-methyl-5-(diphosphooxymethyl)pyrimidine. Residues G165 and 185–186 each bind 2-[(2R,5Z)-2-carboxy-4-methylthiazol-5(2H)-ylidene]ethyl phosphate; that span reads VS.

This sequence belongs to the thiamine-phosphate synthase family. Mg(2+) is required as a cofactor.

The enzyme catalyses 2-[(2R,5Z)-2-carboxy-4-methylthiazol-5(2H)-ylidene]ethyl phosphate + 4-amino-2-methyl-5-(diphosphooxymethyl)pyrimidine + 2 H(+) = thiamine phosphate + CO2 + diphosphate. It catalyses the reaction 2-(2-carboxy-4-methylthiazol-5-yl)ethyl phosphate + 4-amino-2-methyl-5-(diphosphooxymethyl)pyrimidine + 2 H(+) = thiamine phosphate + CO2 + diphosphate. The catalysed reaction is 4-methyl-5-(2-phosphooxyethyl)-thiazole + 4-amino-2-methyl-5-(diphosphooxymethyl)pyrimidine + H(+) = thiamine phosphate + diphosphate. It participates in cofactor biosynthesis; thiamine diphosphate biosynthesis; thiamine phosphate from 4-amino-2-methyl-5-diphosphomethylpyrimidine and 4-methyl-5-(2-phosphoethyl)-thiazole: step 1/1. In terms of biological role, condenses 4-methyl-5-(beta-hydroxyethyl)thiazole monophosphate (THZ-P) and 2-methyl-4-amino-5-hydroxymethyl pyrimidine pyrophosphate (HMP-PP) to form thiamine monophosphate (TMP). The chain is Thiamine-phosphate synthase from Persephonella marina (strain DSM 14350 / EX-H1).